The chain runs to 340 residues: Ketol-acid reductoisomerase (NADP(+)) (340 aa).

The KARI N-terminal Rossmann domain occupies 2-182 (ANIYYENHAD…GCTRAGVIET (181 aa)). NADP(+) is bound by residues 25–28 (FGSQ), Ser51, Ser53, and 83–86 (DTAQ). His108 is a catalytic residue. Gly134 is a binding site for NADP(+). One can recognise a KARI C-terminal knotted domain in the interval 183 to 328 (TFAEETETDL…RELRRMMPFV (146 aa)). Positions 191, 195, 227, and 231 each coordinate Mg(2+). Position 252 (Ser252) interacts with substrate.

This sequence belongs to the ketol-acid reductoisomerase family. It depends on Mg(2+) as a cofactor.

It carries out the reaction (2R)-2,3-dihydroxy-3-methylbutanoate + NADP(+) = (2S)-2-acetolactate + NADPH + H(+). It catalyses the reaction (2R,3R)-2,3-dihydroxy-3-methylpentanoate + NADP(+) = (S)-2-ethyl-2-hydroxy-3-oxobutanoate + NADPH + H(+). It participates in amino-acid biosynthesis; L-isoleucine biosynthesis; L-isoleucine from 2-oxobutanoate: step 2/4. It functions in the pathway amino-acid biosynthesis; L-valine biosynthesis; L-valine from pyruvate: step 2/4. Its function is as follows. Involved in the biosynthesis of branched-chain amino acids (BCAA). Catalyzes an alkyl-migration followed by a ketol-acid reduction of (S)-2-acetolactate (S2AL) to yield (R)-2,3-dihydroxy-isovalerate. In the isomerase reaction, S2AL is rearranged via a Mg-dependent methyl migration to produce 3-hydroxy-3-methyl-2-ketobutyrate (HMKB). In the reductase reaction, this 2-ketoacid undergoes a metal-dependent reduction by NADPH to yield (R)-2,3-dihydroxy-isovalerate. This chain is Ketol-acid reductoisomerase (NADP(+)), found in Roseiflexus castenholzii (strain DSM 13941 / HLO8).